A 173-amino-acid polypeptide reads, in one-letter code: Large ribosomal subunit protein uL10 (173 aa).

It belongs to the universal ribosomal protein uL10 family. As to quaternary structure, part of the ribosomal stalk of the 50S ribosomal subunit. The N-terminus interacts with L11 and the large rRNA to form the base of the stalk. The C-terminus forms an elongated spine to which L12 dimers bind in a sequential fashion forming a multimeric L10(L12)X complex.

Forms part of the ribosomal stalk, playing a central role in the interaction of the ribosome with GTP-bound translation factors. In Bifidobacterium longum (strain DJO10A), this protein is Large ribosomal subunit protein uL10.